A 214-amino-acid chain; its full sequence is Ribonuclease P protein component 3 (214 aa).

This sequence belongs to the eukaryotic/archaeal RNase P protein component 3 family. Consists of a catalytic RNA component and at least 4-5 protein subunits. Forms a subcomplex with Rnp2 which stimulates the catalytic RNA.

Its subcellular location is the cytoplasm. It carries out the reaction Endonucleolytic cleavage of RNA, removing 5'-extranucleotides from tRNA precursor.. Its function is as follows. Part of ribonuclease P, a protein complex that generates mature tRNA molecules by cleaving their 5'-ends. The RNA is catalytic, but its KM for pre-tRNA is 170-fold decreased in the presence of the 4 known protein subunits (Rnp1-4). The protein subunits also decrease the amount of Mg(2+) needed for activity. The polypeptide is Ribonuclease P protein component 3 (Pyrococcus furiosus (strain ATCC 43587 / DSM 3638 / JCM 8422 / Vc1)).